The following is a 1035-amino-acid chain: Teashirt homolog 2 (1035 aa).

Residues 1 to 92 (MPRRKQQAPK…ESLLSDASDQ (92 aa)) form a disordered region. A coiled-coil region spans residues 13 to 42 (AGYAQEEQLKEEEEIKEEEEEEEDSGSVAQ). The span at 21 to 37 (LKEEEEIKEEEEEEEDS) shows a compositional bias: acidic residues. Polar residues-rich tracts occupy residues 39–49 (SVAQLQGSNDP) and 66–92 (SYQN…ASDQ). Lysine 189 participates in a covalent cross-link: Glycyl lysine isopeptide (Lys-Gly) (interchain with G-Cter in SUMO2). C2H2-type zinc fingers lie at residues 216-240 (FRCR…ETGH) and 276-300 (LKCM…KTKH). Positions 240–266 (HYQDDNRKKDKLRPTSYSKPRKRAFQD) are disordered. Residues lysine 307 and lysine 316 each participate in a glycyl lysine isopeptide (Lys-Gly) (interchain with G-Cter in SUMO2) cross-link. The C2H2-type 3; atypical zinc finger occupies 381–405 (LKCMECGSSHDTLQQLTTHMMVTGH). A Glycyl lysine isopeptide (Lys-Gly) (interchain with G-Cter in SUMO2) cross-link involves residue lysine 418. A compositionally biased stretch (low complexity) spans 432-450 (SLSDAPSSDSLAPKPSSNS). Positions 432-496 (SLSDAPSSDS…DPLQKPLDPA (65 aa)) are disordered. Positions 460 to 483 (ELKRESKKEKPEELRTDEKVLKSE) are enriched in basic and acidic residues. Glycyl lysine isopeptide (Lys-Gly) (interchain with G-Cter in SUMO2) cross-links involve residues lysine 462, lysine 481, lysine 498, and lysine 602. Disordered stretches follow at residues 600–674 (QVKK…VEPV) and 764–791 (QPID…PQKH). Basic and acidic residues predominate over residues 601–669 (VKKEPEDKEE…KDGGEKEKAQ (69 aa)). Glycyl lysine isopeptide (Lys-Gly) (interchain with G-Cter in SUMO2) cross-links involve residues lysine 801 and lysine 821. The homeobox DNA-binding region spans 842–912 (RKGRQSNWNP…NVKYQLRKTG (71 aa)). A C2H2-type 4 zinc finger spans residues 927–949 (FYCSDCASQFRTPSTYISHLESH). Low complexity predominate over residues 968-977 (VEQEISRVSS). 2 disordered regions span residues 968–987 (VEQE…TIAG) and 1015–1035 (SKTH…VDEE). Serine 981 carries the post-translational modification Phosphoserine. The C2H2-type 5 zinc-finger motif lies at 995 to 1018 (FKCKLCCRTFVSKHAVKLHLSKTH).

The protein belongs to the teashirt C2H2-type zinc-finger protein family. In terms of assembly, interacts (via homeobox domain) with APBB1 (via PID domain 1). In terms of processing, sumoylated.

Its subcellular location is the nucleus. In terms of biological role, probable transcriptional regulator involved in developmental processes. May act as a transcriptional repressor (Potential). The sequence is that of Teashirt homolog 2 (TSHZ2) from Sus scrofa (Pig).